The chain runs to 32 residues: Glutathione S-transferase 8.2 (32 aa).

21-22 (QS) serves as a coordination point for glutathione.

The protein belongs to the GST superfamily. Alpha family. As to quaternary structure, homodimer. Post-translationally, the N-terminus is blocked.

It is found in the cytoplasm. The enzyme catalyses RX + glutathione = an S-substituted glutathione + a halide anion + H(+). In terms of biological role, conjugation of reduced glutathione to a wide number of exogenous and endogenous hydrophobic electrophiles. This is Glutathione S-transferase 8.2 from Dicentrarchus labrax (European seabass).